Consider the following 448-residue polypeptide: Leukocyte immunoglobulin-like receptor subfamily B member 4 (448 aa).

A signal peptide spans 1–21; that stretch reads MIPTFTALLCLGLSLGPRTHM. The Extracellular portion of the chain corresponds to 22-259; that stretch reads QAGPLPKPTL…PHSGLRRHWE (238 aa). 2 consecutive Ig-like C2-type domains span residues 27–118 and 124–218; these read PKPT…LVMT and PTLS…LIVS. 2 cysteine pairs are disulfide-bonded: Cys-49–Cys-98 and Cys-144–Cys-195. The segment at 217–248 is disordered; sequence VSGSLEDPRPSPTRSVSTAAGPEDQPLMPTGS. Residues 260 to 280 traverse the membrane as a helical segment; sequence VLIGVLVVSILLLSLLLFLLL. Residues 281-448 are Cytoplasmic-facing; it reads QHWRQGKHRT…PSVYATLAIH (168 aa). The segment at 297–448 is disordered; the sequence is DFQRPPGAAE…PSVYATLAIH (152 aa). Ser-319 carries the post-translational modification Phosphoserine. Basic and acidic residues predominate over residues 344–354; that stretch reads MDTRQSPHDED. The ITIM motif 1 motif lies at 358 to 363; it reads VTYAKV. A compositionally biased stretch (basic and acidic residues) spans 384–398; the sequence is LDTKDRQAEEDRQMD. Short sequence motifs (ITIM motif) lie at residues 410 to 415 and 440 to 445; these read VTYAQL and SVYATL.

Interacts with PTPN6. As to expression, detected on monocytes, macrophages, dendritic cells, natural killer cells and B-cells (at protein level). Expressed in the lung.

The protein resides in the cell membrane. Its function is as follows. Inhibitory receptor involved in the down-regulation of the immune response and the development of immune tolerance. Receptor for FN1. Receptor for apolipoprotein APOE. Receptor for ALCAM/CD166. Inhibits receptor-mediated phosphorylation of cellular proteins and mobilization of intracellular calcium ions. Inhibits FCGR1A/CD64-mediated monocyte activation by inducing phosphatase-mediated down-regulation of the phosphorylation of multiple proteins including LCK, SYK, LAT and ERK, leading to a reduction in TNF production. This inhibition of monocyte activation occurs at least in part via binding to FN1. Inhibits T cell proliferation, inducing anergy, suppressing the differentiation of IFNG-producing CD8+ cytotoxic T cells and enhancing the generation of CD8+ T suppressor cells. Induces up-regulation of CD86 on dendritic cells. Interferes with TNFRSF5-signaling and NF-kappa-B up-regulation. The sequence is that of Leukocyte immunoglobulin-like receptor subfamily B member 4 (LILRB4) from Homo sapiens (Human).